A 243-amino-acid polypeptide reads, in one-letter code: Uridylate kinase (243 aa).

15–18 (KLSG) is a binding site for ATP. Residues 23 to 28 (GEEGFG) are involved in allosteric activation by GTP. Residue Gly-57 participates in UMP binding. Residues Gly-58 and Arg-62 each coordinate ATP. UMP contacts are provided by residues Asp-77 and 138-145 (TGNPFFTT). Positions 165, 171, and 174 each coordinate ATP.

Belongs to the UMP kinase family. Homohexamer.

The protein resides in the cytoplasm. It catalyses the reaction UMP + ATP = UDP + ADP. It participates in pyrimidine metabolism; CTP biosynthesis via de novo pathway; UDP from UMP (UMPK route): step 1/1. Its activity is regulated as follows. Allosterically activated by GTP. Inhibited by UTP. Its function is as follows. Catalyzes the reversible phosphorylation of UMP to UDP. The polypeptide is Uridylate kinase (Vibrio campbellii (strain ATCC BAA-1116)).